Consider the following 370-residue polypeptide: DNA replication and repair protein RecF (370 aa).

30 to 37 (GDNGSGKT) serves as a coordination point for ATP.

This sequence belongs to the RecF family.

It is found in the cytoplasm. Functionally, the RecF protein is involved in DNA metabolism; it is required for DNA replication and normal SOS inducibility. RecF binds preferentially to single-stranded, linear DNA. It also seems to bind ATP. The sequence is that of DNA replication and repair protein RecF from Stutzerimonas stutzeri (strain A1501) (Pseudomonas stutzeri).